The primary structure comprises 118 residues: Small ribosomal subunit protein uS13 (118 aa).

The tract at residues 93–118 (KGLPVRGQRTKTNARTRKGPRKPIRK) is disordered.

This sequence belongs to the universal ribosomal protein uS13 family. In terms of assembly, part of the 30S ribosomal subunit. Forms a loose heterodimer with protein S19. Forms two bridges to the 50S subunit in the 70S ribosome.

In terms of biological role, located at the top of the head of the 30S subunit, it contacts several helices of the 16S rRNA. In the 70S ribosome it contacts the 23S rRNA (bridge B1a) and protein L5 of the 50S subunit (bridge B1b), connecting the 2 subunits; these bridges are implicated in subunit movement. Contacts the tRNAs in the A and P-sites. This is Small ribosomal subunit protein uS13 from Ectopseudomonas mendocina (strain ymp) (Pseudomonas mendocina).